Here is a 195-residue protein sequence, read N- to C-terminus: Chromophore lyase CpcT/CpeT 2 (195 aa).

Belongs to the CpcT/CpeT biliprotein lyase family.

In terms of biological role, covalently attaches a chromophore to Cys residue(s) of phycobiliproteins. The chain is Chromophore lyase CpcT/CpeT 2 from Trichodesmium erythraeum (strain IMS101).